The following is a 299-amino-acid chain: Pyridoxal 5'-phosphate synthase subunit PdxS (299 aa).

D24 lines the D-ribose 5-phosphate pocket. Catalysis depends on K81, which acts as the Schiff-base intermediate with D-ribose 5-phosphate. A D-ribose 5-phosphate-binding site is contributed by G153. R165 contacts D-glyceraldehyde 3-phosphate. D-ribose 5-phosphate is bound by residues G219 and 240–241 (GS).

It belongs to the PdxS/SNZ family. In terms of assembly, in the presence of PdxT, forms a dodecamer of heterodimers.

The enzyme catalyses aldehydo-D-ribose 5-phosphate + D-glyceraldehyde 3-phosphate + L-glutamine = pyridoxal 5'-phosphate + L-glutamate + phosphate + 3 H2O + H(+). Its pathway is cofactor biosynthesis; pyridoxal 5'-phosphate biosynthesis. In terms of biological role, catalyzes the formation of pyridoxal 5'-phosphate from ribose 5-phosphate (RBP), glyceraldehyde 3-phosphate (G3P) and ammonia. The ammonia is provided by the PdxT subunit. Can also use ribulose 5-phosphate and dihydroxyacetone phosphate as substrates, resulting from enzyme-catalyzed isomerization of RBP and G3P, respectively. This Methanococcus vannielii (strain ATCC 35089 / DSM 1224 / JCM 13029 / OCM 148 / SB) protein is Pyridoxal 5'-phosphate synthase subunit PdxS.